The sequence spans 261 residues: Ethanolamine ammonia-lyase small subunit (261 aa).

Residues Val157, Glu178, and Cys207 each contribute to the adenosylcob(III)alamin site.

The protein belongs to the EutC family. The basic unit is a heterodimer which dimerizes to form tetramers. The heterotetramers trimerize; 6 large subunits form a core ring with 6 small subunits projecting outwards. Requires adenosylcob(III)alamin as cofactor.

It localises to the bacterial microcompartment. It catalyses the reaction ethanolamine = acetaldehyde + NH4(+). Its pathway is amine and polyamine degradation; ethanolamine degradation. Catalyzes the deamination of various vicinal amino-alcohols to oxo compounds. Allows this organism to utilize ethanolamine as the sole source of nitrogen and carbon in the presence of external vitamin B12. In Rhodopseudomonas palustris (strain BisA53), this protein is Ethanolamine ammonia-lyase small subunit.